Reading from the N-terminus, the 396-residue chain is 8-amino-7-oxononanoate synthase (396 aa).

Position 19 (Arg-19) interacts with substrate. Pyridoxal 5'-phosphate is bound at residue 106–107 (GY). A substrate-binding site is contributed by His-131. Pyridoxal 5'-phosphate is bound by residues Ser-176, His-204, and Thr-233. N6-(pyridoxal phosphate)lysine is present on Lys-236. Thr-350 contacts substrate.

This sequence belongs to the class-II pyridoxal-phosphate-dependent aminotransferase family. BioF subfamily. Homodimer. Requires pyridoxal 5'-phosphate as cofactor.

The enzyme catalyses 6-carboxyhexanoyl-[ACP] + L-alanine + H(+) = (8S)-8-amino-7-oxononanoate + holo-[ACP] + CO2. It functions in the pathway cofactor biosynthesis; biotin biosynthesis. Its function is as follows. Catalyzes the decarboxylative condensation of pimeloyl-[acyl-carrier protein] and L-alanine to produce 8-amino-7-oxononanoate (AON), [acyl-carrier protein], and carbon dioxide. The chain is 8-amino-7-oxononanoate synthase from Pseudomonas syringae pv. tomato (strain ATCC BAA-871 / DC3000).